A 298-amino-acid chain; its full sequence is ATP synthase gamma chain (298 aa).

This sequence belongs to the ATPase gamma chain family. In terms of assembly, F-type ATPases have 2 components, CF(1) - the catalytic core - and CF(0) - the membrane proton channel. CF(1) has five subunits: alpha(3), beta(3), gamma(1), delta(1), epsilon(1). CF(0) has three main subunits: a, b and c.

It localises to the cell inner membrane. Functionally, produces ATP from ADP in the presence of a proton gradient across the membrane. The gamma chain is believed to be important in regulating ATPase activity and the flow of protons through the CF(0) complex. The sequence is that of ATP synthase gamma chain from Wolinella succinogenes (strain ATCC 29543 / DSM 1740 / CCUG 13145 / JCM 31913 / LMG 7466 / NCTC 11488 / FDC 602W) (Vibrio succinogenes).